The chain runs to 397 residues: Guanine nucleotide-binding protein G(s) subunit alpha (397 aa).

Residues 1-23 (MGCLGNSKTEDQRNEEKAQREAN) are disordered. The N-palmitoyl glycine moiety is linked to residue Gly2. A lipid anchor (S-palmitoyl cysteine) is attached at Cys3. A compositionally biased stretch (basic and acidic residues) spans 8–23 (KTEDQRNEEKAQREAN). The G-alpha domain maps to 39–397 (ATHRLLLLGA…RMHLRQYELL (359 aa)). Positions 42–55 (RLLLLGAGESGKST) are G1 motif. GTP-binding positions include 47-55 (GAGESGKST), 182-189 (LLRCRVLT), 208-212 (DVGGQ), 277-280 (NKQD), and Ala369. Ser54 and Thr189 together coordinate Mg(2+). The segment at 181-189 (DLLRCRVLT) is G2 motif. Positions 204 to 213 (FHMFDVGGQR) are G3 motif. The G4 motif stretch occupies residues 273–280 (ILFLNKQD). The segment at 367 to 372 (TCAVDT) is G5 motif.

It belongs to the G-alpha family. G(s) subfamily. In terms of assembly, heterotrimeric G proteins are composed of 3 units; alpha, beta and gamma. The alpha chain contains the guanine nucleotide binding site. Interacts with CRY1; the interaction may block GPCR-mediated regulation of cAMP concentrations. Interacts with ADCY6 and stimulates its adenylyl cyclase activity. Interacts with ADCY2 and ADCY5. Stimulates the ADCY5 adenylyl cyclase activity. Interaction with SASH1.

Its subcellular location is the cell membrane. Its function is as follows. Guanine nucleotide-binding proteins (G proteins) function as transducers in numerous signaling pathways controlled by G protein-coupled receptors (GPCRs). Signaling involves the activation of adenylyl cyclases, resulting in increased levels of the signaling molecule cAMP. GNAS functions downstream of several GPCRs, including beta-adrenergic receptors. Stimulates the Ras signaling pathway via RAPGEF2. The polypeptide is Guanine nucleotide-binding protein G(s) subunit alpha (GNAS) (Sus scrofa (Pig)).